We begin with the raw amino-acid sequence, 300 residues long: Large ribosomal subunit protein bL9m (300 aa).

It belongs to the bacterial ribosomal protein bL9 family. In terms of assembly, component of the mitochondrial large ribosomal subunit (mt-LSU). Mature N.crassa 74S mitochondrial ribosomes consist of a small (37S) and a large (54S) subunit. The 37S small subunit contains a 16S ribosomal RNA (16S mt-rRNA) and 32 different proteins. The 54S large subunit contains a 23S rRNA (23S mt-rRNA) and 42 different proteins.

The protein localises to the mitochondrion. Its function is as follows. Component of the mitochondrial ribosome (mitoribosome), a dedicated translation machinery responsible for the synthesis of mitochondrial genome-encoded proteins, including at least some of the essential transmembrane subunits of the mitochondrial respiratory chain. The mitoribosomes are attached to the mitochondrial inner membrane and translation products are cotranslationally integrated into the membrane. In Neurospora crassa (strain ATCC 24698 / 74-OR23-1A / CBS 708.71 / DSM 1257 / FGSC 987), this protein is Large ribosomal subunit protein bL9m (mrpl50).